The primary structure comprises 809 residues: Ribonuclease Z 1 (809 aa).

Residues 74–93 form a disordered region; the sequence is ISSPDTYDSSSSSSTTSVSD.

This sequence belongs to the RNase Z family. Zn(2+) is required as a cofactor.

It is found in the nucleus. The protein localises to the cytoplasm. It carries out the reaction Endonucleolytic cleavage of RNA, removing extra 3' nucleotides from tRNA precursor, generating 3' termini of tRNAs. A 3'-hydroxy group is left at the tRNA terminus and a 5'-phosphoryl group is left at the trailer molecule.. Functionally, zinc phosphodiesterase, which displays some tRNA 3'-processing endonuclease activity. May be involved in tRNA maturation, by removing a 3'-trailer from precursor tRNA. This Schizosaccharomyces pombe (strain 972 / ATCC 24843) (Fission yeast) protein is Ribonuclease Z 1 (trz1).